A 1483-amino-acid polypeptide reads, in one-letter code: Heme-responsive zinc finger transcription factor HAP1 (1483 aa).

Positions 1-50 (MSNTPYNSSVPSIASMTQSSVSRSPNMHTATTPGANTSSNSPPLHMSSDS) are enriched in polar residues. The tract at residues 1-56 (MSNTPYNSSVPSIASMTQSSVSRSPNMHTATTPGANTSSNSPPLHMSSDSSKIKRK) is disordered. Zn(2+) is bound by residues C64, C67, C74, C81, C84, and C93. Residues 64 to 93 (CTICRKRKVKCDKLRPHCQQCTKTGVAHLC) constitute a DNA-binding region (zn(2)-C6 fungal-type). A coiled-coil region spans residues 105-134 (EKELLKDNELKKLRERVKSLEKTLSKVHSS). Polar residues predominate over residues 162-176 (VNANTGSASSASHMH). The segment at 162–208 (VNANTGSASSASHMHQQQQQQQQQEQQQDFSRSANANANSSSLSISN) is disordered. A compositionally biased stretch (low complexity) spans 177-208 (QQQQQQQQQEQQQDFSRSANANANSSSLSISN). The interval 244–444 (KGDPYLKLLW…NTIPHHQPQS (201 aa)) is heme-responsive; required for HMC formation. HRM repeat units lie at residues 280–285 (KCPINH), 299–304 (KCPVDH), 323–328 (KCPVDH), 347–352 (RCPVDH), 389–394 (KCPVDH), and 415–420 (RCPIDH). Polar residues-rich tracts occupy residues 432 to 447 (STHN…SGSH) and 706 to 734 (QLNA…NPTL). Disordered regions lie at residues 432 to 458 (STHN…NRKH) and 706 to 767 (QLNA…KENQ). Residues 735 to 759 (NNNMSAATTNSSSRSGSADSRSGSN) are compositionally biased toward low complexity. One copy of the HRM 7 repeat lies at 1192–1197 (KCPVYQ). The interval 1384–1411 (TANTDTSANGSALSTLTSPQGSDLASNS) is disordered. Residues 1388-1411 (DTSANGSALSTLTSPQGSDLASNS) show a composition bias toward polar residues.

As to quaternary structure, binds DNA as a homodimer. Interacts with SRO9 and YDJ1. In the absence of heme, binds to at least four cellular proteins, including YDJ1 and SRO9, forming a high-molecular-weight complex (HMC) which results in repression of its activity and dictates its DNA-binding specificity.

The protein localises to the nucleus. In terms of biological role, regulation of oxygen dependent gene expression. It modulates the expression of Iso-1 (CYP1) and Iso-2 (CYP3) cytochrome c. In response to heme, promotes transcription of genes encoding functions required for respiration, controlling oxidative damage and repression of anaerobic genes. Binds to the sequence 5'-CGGNNNTNNCGG-3'. This Saccharomyces cerevisiae (strain RM11-1a) (Baker's yeast) protein is Heme-responsive zinc finger transcription factor HAP1 (HAP1).